A 382-amino-acid polypeptide reads, in one-letter code: Succinate--CoA ligase [ADP-forming] subunit beta (382 aa).

Residues 9 to 237 (RDLLARYGIP…PSAEPEAERR (229 aa)) enclose the ATP-grasp domain. Residues Lys-45, 52–54 (GRG), Ile-94, and Glu-99 each bind ATP. Positions 192 and 206 each coordinate Mg(2+). Substrate-binding positions include Asn-257 and 314 to 316 (GIT).

This sequence belongs to the succinate/malate CoA ligase beta subunit family. Heterotetramer of two alpha and two beta subunits. It depends on Mg(2+) as a cofactor.

It catalyses the reaction succinate + ATP + CoA = succinyl-CoA + ADP + phosphate. The catalysed reaction is GTP + succinate + CoA = succinyl-CoA + GDP + phosphate. Its pathway is carbohydrate metabolism; tricarboxylic acid cycle; succinate from succinyl-CoA (ligase route): step 1/1. Functionally, succinyl-CoA synthetase functions in the citric acid cycle (TCA), coupling the hydrolysis of succinyl-CoA to the synthesis of either ATP or GTP and thus represents the only step of substrate-level phosphorylation in the TCA. The beta subunit provides nucleotide specificity of the enzyme and binds the substrate succinate, while the binding sites for coenzyme A and phosphate are found in the alpha subunit. This chain is Succinate--CoA ligase [ADP-forming] subunit beta, found in Chloroflexus aggregans (strain MD-66 / DSM 9485).